Consider the following 79-residue polypeptide: MSEIGERVKKIVVEHLGVEPEKVVDAASFIDDLGADSLDTVELVMAFEEEFGCEIPDDAAETILTVGDAVKFLEKNAKS.

The 76-residue stretch at 2-77 (SEIGERVKKI…DAVKFLEKNA (76 aa)) folds into the Carrier domain. Serine 37 carries the O-(pantetheine 4'-phosphoryl)serine modification.

The protein belongs to the acyl carrier protein (ACP) family. In terms of processing, 4'-phosphopantetheine is transferred from CoA to a specific serine of apo-ACP by AcpS. This modification is essential for activity because fatty acids are bound in thioester linkage to the sulfhydryl of the prosthetic group.

It is found in the cytoplasm. The protein operates within lipid metabolism; fatty acid biosynthesis. In terms of biological role, carrier of the growing fatty acid chain in fatty acid biosynthesis. This is Acyl carrier protein from Rhodopseudomonas palustris (strain BisA53).